A 28-amino-acid chain; its full sequence is Trypsin inhibitor 4 (28 aa).

3 disulfide bridges follow: cysteine 2-cysteine 19, cysteine 9-cysteine 21, and cysteine 15-cysteine 27.

This sequence belongs to the protease inhibitor I7 (squash-type serine protease inhibitor) family.

It is found in the secreted. Functionally, inhibits trypsin. This Luffa aegyptiaca (Sponge gourd) protein is Trypsin inhibitor 4.